A 113-amino-acid polypeptide reads, in one-letter code: Bactofilin BacN (113 aa).

The protein belongs to the bactofilin family. As to quaternary structure, interacts with BacO and BacP, the 3 proteins colocalize as an extended structure.

It localises to the cytoplasm. Its subcellular location is the cytoskeleton. Its function is as follows. A non-essential component of the chromosome segregation machinery. Positions the ParA-ParB-parS chromosome segregation machinery within the cell; BacP seems to be the most important bactofilin in this process. Forms a heteropolymeric, subpolar scaffold in the cell; BacP probably forms the core, BacO contributes to position and integrity while BacN does not seem to contribute to assembly. This chain is Bactofilin BacN, found in Myxococcus xanthus (strain DK1622).